We begin with the raw amino-acid sequence, 172 residues long: Large ribosomal subunit protein uL10 (172 aa).

It belongs to the universal ribosomal protein uL10 family. As to quaternary structure, part of the ribosomal stalk of the 50S ribosomal subunit. The N-terminus interacts with L11 and the large rRNA to form the base of the stalk. The C-terminus forms an elongated spine to which L12 dimers bind in a sequential fashion forming a multimeric L10(L12)X complex.

Forms part of the ribosomal stalk, playing a central role in the interaction of the ribosome with GTP-bound translation factors. The chain is Large ribosomal subunit protein uL10 from Beijerinckia indica subsp. indica (strain ATCC 9039 / DSM 1715 / NCIMB 8712).